We begin with the raw amino-acid sequence, 622 residues long: MLSCSSFLIFFLFSWVLLPMKSFAIPIISLDKVRLAINDGASEQLPVVIWHGLGDTPTSFTLTEVSQRVQKLTKGAVYAIRVGDNEFEDIKAGYLGKLEDQLDEVCDLIGNEDSLSNGFYALGLSQGGLFLRALAQTCDAAKIRSLITLGSPHSGINTIPGCSPTNLICKAVVHSILGLGIWHSWIQNHVVQAQYYRTEKQYDKYLENNKFLTHLNNEVLHDNYTRNIEKLKELDNLVAVSFERDDIVEPPYSTGFGWINETTGENIEMEDFVLYESLGLKDLVNQGKLETISFPGRHLQMRWGDFDALVLKYFKDEKEEKTELEESTRPSNFLSTYFVSPLVSAIDGTVDYLHGKSLFPEKRNFKELTMRKRSIVTPEDSEEVYPYISEFVAASNVSEEKGPKSFANLAFITIFSHFFYHIDDMWRSTLGLFSLIPQIIGIIYLTVMFTGRELDTFMQFGGQVVNEFINYVVKVSLKYPRPADIEYGVGYGMPSSHSQFMGFFSAYMIAWDYKYRRSQCFSMLSFAKYAIYLTLSTFVCSSRYLLDFHYLTQVVYGYMIGFGVGLFWVYLVGKLRSLGVTKWLLSLPPLQFFYIKDTIPHSKDNHKRQWLESKQFKNQKSN.

An N-terminal signal peptide occupies residues 1-24 (MLSCSSFLIFFLFSWVLLPMKSFA). At 25-405 (IPIISLDKVR…NVSEEKGPKS (381 aa)) the chain is on the lumenal side. Cys106 and Cys138 are joined by a disulfide. Residue Ser125 is part of the active site. Asn223 carries N-linked (GlcNAc...) asparagine glycosylation. The active site involves Asp245. An N-linked (GlcNAc...) asparagine glycan is attached at Asn260. Residue His298 is part of the active site. A glycan (N-linked (GlcNAc...) asparagine) is linked at Asn396. The helical transmembrane segment at 406-426 (FANLAFITIFSHFFYHIDDMW) threads the bilayer. Over 427-428 (RS) the chain is Cytoplasmic. A helical transmembrane segment spans residues 429 to 449 (TLGLFSLIPQIIGIIYLTVMF). Over 450–488 (TGRELDTFMQFGGQVVNEFINYVVKVSLKYPRPADIEYG) the chain is Lumenal. The helical transmembrane segment at 489-511 (VGYGMPSSHSQFMGFFSAYMIAW) threads the bilayer. At 512-519 (DYKYRRSQ) the chain is on the cytoplasmic side. Residues 520–540 (CFSMLSFAKYAIYLTLSTFVC) form a helical membrane-spanning segment. Residues 541–552 (SSRYLLDFHYLT) lie on the Lumenal side of the membrane. Residues 553–573 (QVVYGYMIGFGVGLFWVYLVG) form a helical membrane-spanning segment. Residues 574-622 (KLRSLGVTKWLLSLPPLQFFYIKDTIPHSKDNHKRQWLESKQFKNQKSN) lie on the Cytoplasmic side of the membrane.

It in the N-terminal section; belongs to the palmitoyl-protein thioesterase family. In the C-terminal section; belongs to the dolichyldiphosphatase family. Post-translationally, proteolytically cleaved, possibly by krp1.

The protein localises to the vacuole. Its subcellular location is the endoplasmic reticulum membrane. The catalysed reaction is S-hexadecanoyl-L-cysteinyl-[protein] + H2O = L-cysteinyl-[protein] + hexadecanoate + H(+). The enzyme catalyses a di-trans,poly-cis-dolichyl diphosphate + H2O = a di-trans,poly-cis-dolichyl phosphate + phosphate + H(+). Functionally, essential protein. Removes thioester-linked fatty acyl groups such as palmitate from modified cysteine residues in proteins or peptides during vacuolar degradation. Required for efficient N-glycosylation. Necessary for maintaining optimal levels of dolichol-linked oligosaccharides. The polypeptide is Palmitoyl-protein thioesterase-dolichyl pyrophosphate phosphatase fusion 1 (pdf1) (Schizosaccharomyces pombe (strain 972 / ATCC 24843) (Fission yeast)).